The primary structure comprises 166 residues: EndA-like protein (166 aa).

Belongs to the tRNA-intron endonuclease family. Archaeal short subfamily.

This is EndA-like protein from Methanopyrus kandleri (strain AV19 / DSM 6324 / JCM 9639 / NBRC 100938).